The following is a 263-amino-acid chain: Lens fiber major intrinsic protein (263 aa).

Residues 1 to 9 (MWELRSASF) are Cytoplasmic-facing. A helical transmembrane segment spans residues 10 to 29 (WRAIFAEFFATLFYVFFGLG). Residues 30–41 (ASLRWAPGPLHV) are Extracellular-facing. A helical membrane pass occupies residues 42–59 (LQVALAFGLALAXLVQTV). Over 60–61 (GH) the chain is Cytoplasmic. Positions 62–77 (ISGAHVNPAVTFXFLV) form an intramembrane region, discontinuously helical. An NPA 1 motif is present at residues 68-70 (NPA). Residues 78-82 (GSQMS) lie on the Cytoplasmic side of the membrane. A helical membrane pass occupies residues 83–106 (LLRAFCYMAAQLLGAVAGAAVLYS). Residues 107 to 127 (VTPPAVRGNLALNTLHAGVSV) are Extracellular-facing. A helical membrane pass occupies residues 128–148 (XQATTVEIFLTLQFVLCIFAT). Residues 149–156 (YDERRNGR) lie on the Cytoplasmic side of the membrane. A helical transmembrane segment spans residues 157 to 175 (LGSVALAVGFSLTLGHLFG). Topologically, residues 176-178 (MYY) are extracellular. The segment at residues 179–193 (TGAGMNPARSFAPAI) is an intramembrane region (discontinuously helical). Residues 184 to 186 (NPA) carry the NPA 2 motif. Residues 194–200 (LTRNFTN) are Extracellular-facing. The helical transmembrane segment at 201 to 222 (HWVYWVGPIIGGGLGSLLYDFL) threads the bilayer. The Cytoplasmic segment spans residues 223–263 (LFPRLKSVSERLSILKGTRPSDNNGQPEGTGEPVELKTQAL). The tract at residues 227–237 (LKSVSERLSIL) is interaction with CALM. Serine 235 and serine 243 each carry phosphoserine. A disordered region spans residues 238–263 (KGTRPSDNNGQPEGTGEPVELKTQAL). Deamidated asparagine; by deterioration occurs at positions 245 and 246.

It belongs to the MIP/aquaporin (TC 1.A.8) family. Homotetramer; each monomer provides an independent water pore. Two homotetramers on opposing membranes can dimerize, forming a cell-cell junction. Interacts with CALM; the calcium-calmodulin/CALM complex interacts with the cytoplasmic domains of two aquaporins, leading to channel closure. Interacts with BFSP1 (via C-terminus); prevents calcium-dependent inhibition of the water channel activity. Post-translationally, subject to partial proteolytic cleavage in the eye lens core. Partial proteolysis promotes interactions between tetramers from adjoining membranes. Fatty acylated at Met-1 and Lys-238. The acyl modifications, in decreasing order of ion abundance, are: oleoyl (C18:1) &gt; palmitoyl (C16:0) &gt; stearoyl (C18:0) &gt; eicosenoyl (C20:1) &gt; dihomo-gamma-linolenoyl (C20:3) &gt; palmitoleoyl (C16:1) &gt; eicosadienoyl (C20:2). Detected in eye lens (at protein level).

Its subcellular location is the cell membrane. It is found in the cell junction. It carries out the reaction H2O(in) = H2O(out). With respect to regulation, the water channel activity is inhibited by calcium through calmodulin/CALM. Aquaporins form homotetrameric transmembrane channels, with each monomer independently mediating water transport across the plasma membrane along its osmotic gradient. Specifically expressed in lens fiber cells, this aquaporin is crucial for maintaining lens water homeostasis and transparency. Beyond water permeability, it also acts as a cell-to-cell adhesion molecule, forming thin junctions between lens fiber cells that are essential for maintaining the ordered structure and transparency of the lens. The chain is Lens fiber major intrinsic protein from Cavia porcellus (Guinea pig).